The sequence spans 23 residues: Basic phospholipase A2 mangshantoxin (23 aa).

Belongs to the phospholipase A2 family. Group II subfamily. It depends on Ca(2+) as a cofactor. Contains 7 disulfide bonds. As to expression, expressed by the venom gland.

Its subcellular location is the secreted. It carries out the reaction a 1,2-diacyl-sn-glycero-3-phosphocholine + H2O = a 1-acyl-sn-glycero-3-phosphocholine + a fatty acid + H(+). Functionally, snake venom phospholipase A2 (PLA2) that displays presynaptic neurotoxicity. PLA2 catalyzes the calcium-dependent hydrolysis of the 2-acyl groups in 3-sn-phosphoglycerides. This Protobothrops mangshanensis (Mangshan pitviper) protein is Basic phospholipase A2 mangshantoxin.